The following is a 1453-amino-acid chain: ABC transporter G family member 34 (1453 aa).

Residues 1-24 (MLGRDEDLVRTMSGRGSLGSTSHR) form a disordered region. Residues 173 to 446 (LGLFHLLPSK…FEYMGFKCPE (274 aa)) enclose the ABC transporter 1 domain. Position 206-213 (206-213 (GPPSSGKT)) interacts with ATP. The 214-residue stretch at 524–737 (DLFKACFDRE…GQTALVINEF (214 aa)) folds into the ABC transmembrane type-2 1 domain. The next 6 helical transmembrane spans lie at 542-562 (FVYVFKTVQITIMSLIAMTVY), 582-602 (LFFSLINLMFNGMAELAFTVM), 621-641 (FALPGFLLKIPLSLIESVIWI), 661-681 (LLAYFCVNQMALSLFRFLGAL), 687-707 (IANSGGTLALLVVFVLGGFII), and 773-793 (FWICIGALLGFTVLFNFCYII). Residues 852–1105 (LAFNNVNYYV…LVEYFEAIEG (254 aa)) enclose the ABC transporter 2 domain. 897–904 (GVSGAGKT) provides a ligand contact to ATP. Residues 1177–1391 (TQTKACFWKM…TLYGIITSQV (215 aa)) enclose the ABC transmembrane type-2 2 domain. A run of 7 helical transmembrane segments spans residues 1196 to 1216 (YNAIRFLMTVVIGVLFGLLFW), 1230 to 1250 (NFFGAMYAAVLFLGATNAATV), 1289 to 1309 (IQTGVYTLILYSMIGYDWTVV), 1311 to 1331 (FFWFYYYMLTCFVYFTLYGMM), 1341 to 1361 (IAGICLSFFLSFWNLFSGFLI), 1366 to 1386 (IPIWWRWYYWASPVAWTLYGI), and 1422 to 1442 (FLPVVAVVHIAWILIFLFAFA).

The protein belongs to the ABC transporter superfamily. ABCG family. PDR (TC 3.A.1.205) subfamily. As to expression, expressed in roots at low levels.

Its subcellular location is the membrane. May be a general defense protein. The chain is ABC transporter G family member 34 (ABCG34) from Arabidopsis thaliana (Mouse-ear cress).